The sequence spans 85 residues: U4-theraphotoxin-Hhn1a (85 aa).

Positions 1-22 are cleaved as a signal peptide; that stretch reads MKVTLIAILTCAAALVLHTTAA. A propeptide spanning residues 23-48 is cleaved from the precursor; that stretch reads EELEAESQLMEVGMPDTELAAVDEER. 3 cysteine pairs are disulfide-bonded: cysteine 52-cysteine 66, cysteine 56-cysteine 77, and cysteine 71-cysteine 82.

It belongs to the neurotoxin 12 (Hwtx-2) family. 02 (Hwtx-2) subfamily. Monomer. As to expression, expressed by the venom gland.

It localises to the secreted. Neurotoxin active on both insects and mammals. This is U4-theraphotoxin-Hhn1a from Cyriopagopus hainanus (Chinese bird spider).